The chain runs to 461 residues: ATP synthase subunit beta (461 aa).

An ATP-binding site is contributed by 151–158; that stretch reads GGAGVGKT.

This sequence belongs to the ATPase alpha/beta chains family. As to quaternary structure, F-type ATPases have 2 components, CF(1) - the catalytic core - and CF(0) - the membrane proton channel. CF(1) has five subunits: alpha(3), beta(3), gamma(1), delta(1), epsilon(1). CF(0) has three main subunits: a(1), b(2) and c(9-12). The alpha and beta chains form an alternating ring which encloses part of the gamma chain. CF(1) is attached to CF(0) by a central stalk formed by the gamma and epsilon chains, while a peripheral stalk is formed by the delta and b chains.

The protein localises to the cell inner membrane. The catalysed reaction is ATP + H2O + 4 H(+)(in) = ADP + phosphate + 5 H(+)(out). Its function is as follows. Produces ATP from ADP in the presence of a proton gradient across the membrane. The catalytic sites are hosted primarily by the beta subunits. The protein is ATP synthase subunit beta of Coxiella burnetii (strain Dugway 5J108-111).